We begin with the raw amino-acid sequence, 50 residues long: Large ribosomal subunit protein bL33A (50 aa).

It belongs to the bacterial ribosomal protein bL33 family.

This Mycoplasmopsis pulmonis (strain UAB CTIP) (Mycoplasma pulmonis) protein is Large ribosomal subunit protein bL33A (rpmG1).